Consider the following 152-residue polypeptide: SsrA-binding protein (152 aa).

The protein belongs to the SmpB family.

The protein resides in the cytoplasm. Its function is as follows. Required for rescue of stalled ribosomes mediated by trans-translation. Binds to transfer-messenger RNA (tmRNA), required for stable association of tmRNA with ribosomes. tmRNA and SmpB together mimic tRNA shape, replacing the anticodon stem-loop with SmpB. tmRNA is encoded by the ssrA gene; the 2 termini fold to resemble tRNA(Ala) and it encodes a 'tag peptide', a short internal open reading frame. During trans-translation Ala-aminoacylated tmRNA acts like a tRNA, entering the A-site of stalled ribosomes, displacing the stalled mRNA. The ribosome then switches to translate the ORF on the tmRNA; the nascent peptide is terminated with the 'tag peptide' encoded by the tmRNA and targeted for degradation. The ribosome is freed to recommence translation, which seems to be the essential function of trans-translation. This Rickettsia typhi (strain ATCC VR-144 / Wilmington) protein is SsrA-binding protein.